Consider the following 115-residue polypeptide: Pro-neuregulin-4, membrane-bound isoform (115 aa).

The Extracellular segment spans residues 1–62; the sequence is MPTDHEEPCG…SSIQTKSNLF (62 aa). One can recognise an EGF-like domain in the interval 5–46; sequence HEEPCGPSHKSFCLNGGLCYVIPTIPSPFCRCVENYTGARCE. 3 disulfides stabilise this stretch: C9-C23, C17-C34, and C36-C45. The N-linked (GlcNAc...) asparagine glycan is linked to N39. Residues 63–83 traverse the membrane as a helical segment; that stretch reads EAFVALAVLVTLIIGAFYFLC. Residues 84–115 lie on the Cytoplasmic side of the membrane; it reads RKGHFQRASSVQYDINLVETSSTSAHHSHEQH.

This sequence belongs to the neuregulin family. As to quaternary structure, interacts with ERBB4. In terms of processing, proteolytic cleavage close to the plasma membrane on the external face leads to the release of the soluble growth factor form. Extensive glycosylation precedes the proteolytic cleavage.

Its subcellular location is the cell membrane. The protein localises to the secreted. Its function is as follows. Low affinity ligand for the ERBB4 tyrosine kinase receptor. Concomitantly recruits ERBB1 and ERBB2 coreceptors, resulting in ligand-stimulated tyrosine phosphorylation and activation of the ERBB receptors. Does not bind to the ERBB1, ERBB2 and ERBB3 receptors. This is Pro-neuregulin-4, membrane-bound isoform (NRG4) from Homo sapiens (Human).